We begin with the raw amino-acid sequence, 387 residues long: Succinate--CoA ligase [ADP-forming] subunit beta (387 aa).

The 236-residue stretch at 9–244 (KAIFADNGIP…ITEENPAERE (236 aa)) folds into the ATP-grasp domain. ATP contacts are provided by residues Lys-46, 53-55 (GRG), Glu-99, Ala-102, and Glu-107. Residues Asn-199 and Asp-213 each contribute to the Mg(2+) site. Residues Asn-264 and 321–323 (GIV) each bind substrate.

The protein belongs to the succinate/malate CoA ligase beta subunit family. As to quaternary structure, heterotetramer of two alpha and two beta subunits. It depends on Mg(2+) as a cofactor.

It catalyses the reaction succinate + ATP + CoA = succinyl-CoA + ADP + phosphate. It carries out the reaction GTP + succinate + CoA = succinyl-CoA + GDP + phosphate. It participates in carbohydrate metabolism; tricarboxylic acid cycle; succinate from succinyl-CoA (ligase route): step 1/1. Succinyl-CoA synthetase functions in the citric acid cycle (TCA), coupling the hydrolysis of succinyl-CoA to the synthesis of either ATP or GTP and thus represents the only step of substrate-level phosphorylation in the TCA. The beta subunit provides nucleotide specificity of the enzyme and binds the substrate succinate, while the binding sites for coenzyme A and phosphate are found in the alpha subunit. In Campylobacter jejuni subsp. jejuni serotype O:6 (strain 81116 / NCTC 11828), this protein is Succinate--CoA ligase [ADP-forming] subunit beta.